The sequence spans 962 residues: Rho GTPase-activating protein syd-1 (962 aa).

Disordered regions lie at residues glycine 231–aspartate 367, proline 397–threonine 419, and cysteine 437–proline 471. Polar residues-rich tracts occupy residues asparagine 243 to arginine 261, serine 323 to alanine 345, arginine 401 to leucine 412, and proline 453 to proline 471. The C2 domain occupies arginine 572–leucine 696. The Rho-GAP domain maps to valine 729–leucine 923. Polar residues predominate over residues valine 934–glycine 947. The disordered stretch occupies residues valine 934 to cysteine 962.

The protein localises to the synapse. Functionally, probable GTPase activator for the Rho-type GTPases by converting them to an inactive GDP-bound state. Regulates the localization and assembly of presynaptic components during presynaptic development and is required for specifying the identity of axons during initial polarity acquisition. In these roles it is thought to act cell autonomously downstream of syg-1 and syg-2 and upstream of syd-2, possibly as a positive regulator of the latter. Required for the control of movement, egg-laying and the correct localization of elks-1. This chain is Rho GTPase-activating protein syd-1, found in Caenorhabditis briggsae.